The chain runs to 511 residues: Histidine ammonia-lyase (511 aa).

The segment at residues 142–144 is a cross-link (5-imidazolinone (Ala-Gly)); the sequence is ASG. A 2,3-didehydroalanine (Ser) modification is found at Ser-143.

This sequence belongs to the PAL/histidase family. Contains an active site 4-methylidene-imidazol-5-one (MIO), which is formed autocatalytically by cyclization and dehydration of residues Ala-Ser-Gly.

It is found in the cytoplasm. It carries out the reaction L-histidine = trans-urocanate + NH4(+). The protein operates within amino-acid degradation; L-histidine degradation into L-glutamate; N-formimidoyl-L-glutamate from L-histidine: step 1/3. The protein is Histidine ammonia-lyase of Rhizobium rhizogenes (Agrobacterium rhizogenes).